The chain runs to 616 residues: Chaperone protein HscA (616 aa).

It belongs to the heat shock protein 70 family.

Its function is as follows. Chaperone involved in the maturation of iron-sulfur cluster-containing proteins. Has a low intrinsic ATPase activity which is markedly stimulated by HscB. Involved in the maturation of IscU. This chain is Chaperone protein HscA, found in Klebsiella pneumoniae (strain 342).